The following is a 47-amino-acid chain: Boigatoxin-A (47 aa).

A Pyrrolidone carboxylic acid modification is found at Q1. Cystine bridges form between C10–C34 and C13–C21.

In terms of assembly, monomer. As to expression, expressed by the venom gland.

It is found in the secreted. Functionally, this toxin may inhibit nicotinic acetylcholine receptor (nAChR). It has poorly reversible postsynaptic blocking activity in a chick muscle preparation and readily reversible inhibitory activity at a presynaptic site in the rat vas deferens prostatic segment most likely to prevent the release of neurotransmitters. This Boiga dendrophila (Mangrove snake) protein is Boigatoxin-A.